Here is a 452-residue protein sequence, read N- to C-terminus: Ribosomal protein uS12 methylthiotransferase RimO (452 aa).

Residues 8 to 123 enclose the MTTase N-terminal domain; it reads PRVGFVSLGC…VMQAVHTHLP (116 aa). [4Fe-4S] cluster is bound by residues Cys17, Cys53, Cys82, Cys154, Cys158, and Cys161. The Radical SAM core domain occupies 140–381; sequence LTPKHYAYLK…MEVAEEVSAR (242 aa). Residues 384–452 enclose the TRAM domain; the sequence is QRKVGQTLRV…ADGHDLWGEI (69 aa).

It belongs to the methylthiotransferase family. RimO subfamily. Requires [4Fe-4S] cluster as cofactor.

The protein localises to the cytoplasm. The catalysed reaction is L-aspartate(89)-[ribosomal protein uS12]-hydrogen + (sulfur carrier)-SH + AH2 + 2 S-adenosyl-L-methionine = 3-methylsulfanyl-L-aspartate(89)-[ribosomal protein uS12]-hydrogen + (sulfur carrier)-H + 5'-deoxyadenosine + L-methionine + A + S-adenosyl-L-homocysteine + 2 H(+). Its function is as follows. Catalyzes the methylthiolation of an aspartic acid residue of ribosomal protein uS12. This chain is Ribosomal protein uS12 methylthiotransferase RimO, found in Cupriavidus pinatubonensis (strain JMP 134 / LMG 1197) (Cupriavidus necator (strain JMP 134)).